The following is a 305-amino-acid chain: Membrane glycoprotein UL142 (305 aa).

The N-terminal stretch at 1–19 (MRIEWACWLFGYFVSSVGS) is a signal peptide. Residues 20-270 (ERSLSYRYHL…QKTNNTTSPW (251 aa)) lie on the Lumenal side of the membrane. The chain crosses the membrane as a helical span at residues 271-288 (VYAIPMGATATIGAGLYI). Over 289–305 (GKHFTPVKFVYEVWRGQ) the chain is Cytoplasmic.

As to quaternary structure, interacts with host MICA and ULBP3.

It localises to the host endoplasmic reticulum membrane. Its subcellular location is the host Golgi apparatus membrane. Participates in the inhibition of the host immune response. Prevents host NK cell-mediated lysis of the infected cell by preventing the KLRK1 ligand 3/ULBP3 trafficking to the cell surface. Also retains another KLRK1 ligand, MHC class I-related chain A/MICA, in the Golgi apparatus to avoid its surface expression. The sequence is that of Membrane glycoprotein UL142 (UL142) from Homo sapiens (Human).